The sequence spans 155 residues: Microsomal glutathione S-transferase 1 (155 aa).

The Lumenal portion of the chain corresponds to D3–K9. The chain crosses the membrane as a helical span at residues N10–A33. Topologically, residues T34–Y62 are cytoplasmic. Glutathione is bound at residue R38. N6-acetyllysine is present on residues K42, K55, and K60. A helical transmembrane segment spans residues L63–S96. Positions 73, 74, 76, and 81 each coordinate glutathione. The Lumenal segment spans residues G97 to D99. The chain crosses the membrane as a helical span at residues L100–T123. Residue Y121 participates in glutathione binding. Over P124–P128 the chain is Cytoplasmic. The chain crosses the membrane as a helical span at residues N129–L148. At L149–L155 the chain is on the lumenal side.

This sequence belongs to the MAPEG family. Homotrimer; The trimer binds only one molecule of glutathione.

Its subcellular location is the endoplasmic reticulum membrane. The protein localises to the mitochondrion outer membrane. The catalysed reaction is RX + glutathione = an S-substituted glutathione + a halide anion + H(+). In terms of biological role, conjugation of reduced glutathione to a wide number of exogenous and endogenous hydrophobic electrophiles. The sequence is that of Microsomal glutathione S-transferase 1 (MGST1) from Sus scrofa (Pig).